A 305-amino-acid chain; its full sequence is N-acetylmuramic acid 6-phosphate etherase (305 aa).

The SIS domain occupies 59–222; that stretch reads TSKALGKGGR…STGVMVKLGK (164 aa). Catalysis depends on Glu-87, which acts as the Proton donor. The active site involves Glu-118.

It belongs to the GCKR-like family. MurNAc-6-P etherase subfamily. In terms of assembly, homodimer.

It catalyses the reaction N-acetyl-D-muramate 6-phosphate + H2O = N-acetyl-D-glucosamine 6-phosphate + (R)-lactate. The protein operates within amino-sugar metabolism; N-acetylmuramate degradation. Functionally, specifically catalyzes the cleavage of the D-lactyl ether substituent of MurNAc 6-phosphate, producing GlcNAc 6-phosphate and D-lactate. The chain is N-acetylmuramic acid 6-phosphate etherase from Crocosphaera subtropica (strain ATCC 51142 / BH68) (Cyanothece sp. (strain ATCC 51142)).